Here is a 340-residue protein sequence, read N- to C-terminus: GTP 3',8-cyclase (340 aa).

Residues 8 to 227 (KLGRPIRDLR…TMIEQHFEID (220 aa)) form the Radical SAM core domain. Arg-17 lines the GTP pocket. Cys-24 and Cys-28 together coordinate [4Fe-4S] cluster. S-adenosyl-L-methionine is bound at residue Tyr-30. Cys-31 contributes to the [4Fe-4S] cluster binding site. Arg-71 serves as a coordination point for GTP. Gly-75 serves as a coordination point for S-adenosyl-L-methionine. Residue Thr-102 participates in GTP binding. Ser-126 provides a ligand contact to S-adenosyl-L-methionine. Lys-163 is a binding site for GTP. Met-197 contacts S-adenosyl-L-methionine. [4Fe-4S] cluster contacts are provided by Cys-261 and Cys-264. Residue 266–268 (RAR) participates in GTP binding. A [4Fe-4S] cluster-binding site is contributed by Cys-278.

Belongs to the radical SAM superfamily. MoaA family. In terms of assembly, monomer and homodimer. The cofactor is [4Fe-4S] cluster.

The enzyme catalyses GTP + AH2 + S-adenosyl-L-methionine = (8S)-3',8-cyclo-7,8-dihydroguanosine 5'-triphosphate + 5'-deoxyadenosine + L-methionine + A + H(+). It participates in cofactor biosynthesis; molybdopterin biosynthesis. Catalyzes the cyclization of GTP to (8S)-3',8-cyclo-7,8-dihydroguanosine 5'-triphosphate. The polypeptide is GTP 3',8-cyclase (Staphylococcus aureus (strain Mu3 / ATCC 700698)).